Here is a 113-residue protein sequence, read N- to C-terminus: Large ribosomal subunit protein bL17 (113 aa).

The protein belongs to the bacterial ribosomal protein bL17 family. Part of the 50S ribosomal subunit. Contacts protein L32.

The polypeptide is Large ribosomal subunit protein bL17 (Clostridium beijerinckii (strain ATCC 51743 / NCIMB 8052) (Clostridium acetobutylicum)).